The chain runs to 485 residues: Sodium-coupled neutral amino acid symporter 1 (485 aa).

The Cytoplasmic segment spans residues 1-74 (MMHFKSGLEL…EYIPGTTSLG (74 aa)). Ser6 carries the phosphoserine modification. Thr11 bears the Phosphothreonine mark. A phosphoserine mark is found at Ser25, Ser28, Ser49, and Ser52. At Thr54 the chain carries Phosphothreonine. Ser56 is modified (phosphoserine). The chain crosses the membrane as a helical span at residues 75–97 (MSVFNLSNAIMGSGILGLAFALA). Residues 98–112 (NTGILLFLILLTSVT) are Extracellular-facing. A helical transmembrane segment spans residues 113-133 (LLSIYSINLLLICSKETGCMV). The Cytoplasmic segment spans residues 134–148 (YEKLGEQVFGTTGKL). Residues 149–169 (VIFGATSLQNTGAMLSYLFIV) form a helical membrane-spanning segment. Over 170–188 (KNELPSAIKSLMGEEETFS) the chain is Extracellular. Residues 189 to 211 (AWYVDGRVLVVMVTFGIILPLCL) form a helical membrane-spanning segment. Topologically, residues 212-216 (LKNLG) are cytoplasmic. The chain crosses the membrane as a helical span at residues 217–237 (YLGYTSGFSLSCMVFFLIVVI). The Extracellular segment spans residues 238-273 (YKKFQIPCMNGEQNSTVSANVTDACTPKYVTFNSKT). Cys245 and Cys262 are disulfide-bonded. Residues Asn251 and Asn257 are each glycosylated (N-linked (GlcNAc...) asparagine). The helical transmembrane segment at 274 to 294 (VYALPTIAFAFVCHPSVLPIY) threads the bilayer. At 295–310 (SELKDRSQKKMQMVSN) the chain is on the cytoplasmic side. The helical transmembrane segment at 311-331 (ISFFAMFVMYFLTAIFGYLTF) threads the bilayer. The Extracellular portion of the chain corresponds to 332 to 348 (YEKVQSDLLHKYQSTGD). Residues 349-369 (ILILTVRLAVIVAVILTVPVL) traverse the membrane as a helical segment. Residues 370 to 391 (FFTVRSSLFELAKKTKFHLCRH) lie on the Cytoplasmic side of the membrane. The chain crosses the membrane as a helical span at residues 392-412 (VLVTIILLVIINLLVIFIPSM). Over 413–414 (KD) the chain is Extracellular. The helical transmembrane segment at 415-435 (IFGVVGVTSANMLIFILPSSL) threads the bilayer. Residues 436 to 450 (YLKITNQDGDKNTQR) lie on the Cytoplasmic side of the membrane. The helical transmembrane segment at 451–471 (IWAALFLALGVLFSLISIPLV) threads the bilayer. Over 472 to 485 (IYDWACSSSNGEGH) the chain is Extracellular.

This sequence belongs to the amino acid/polyamine transporter 2 family. N-glycosylation plays an important role in the L-glutamine transport. In terms of tissue distribution, specifically expressed in brain with the highest levels in cerebellum and thalamus (at protein level). Expressed in glutamatergic, GABAergic and a subset of dopaminergic neurons of the substantia nigra and cholinergic motoneurons (at protein level). Also expressed by ependymal cells lining the ventricle (at protein level). Expression is also detected in spinal cord, heart, colon and placenta.

It is found in the cell membrane. It carries out the reaction L-glutamine(in) + Na(+)(in) = L-glutamine(out) + Na(+)(out). It catalyses the reaction L-alanine(in) + Na(+)(in) = L-alanine(out) + Na(+)(out). The enzyme catalyses L-asparagine(in) + Na(+)(in) = L-asparagine(out) + Na(+)(out). The catalysed reaction is L-histidine(in) + Na(+)(in) = L-histidine(out) + Na(+)(out). It carries out the reaction L-serine(in) + Na(+)(in) = L-serine(out) + Na(+)(out). It catalyses the reaction L-cysteine(in) + Na(+)(in) = L-cysteine(out) + Na(+)(out). The enzyme catalyses L-methionine(in) + Na(+)(in) = L-methionine(out) + Na(+)(out). The catalysed reaction is glycine(in) + Na(+)(in) = glycine(out) + Na(+)(out). It carries out the reaction L-threonine(in) + Na(+)(in) = L-threonine(out) + Na(+)(out). It catalyses the reaction L-proline(in) + Na(+)(in) = L-proline(out) + Na(+)(out). With respect to regulation, inhibited by alpha-(methylamino)isobutyric acid (MeAIB). Inhibited by lithium, potassium, choline ions, N-methylglucamine. The pH dependence has an allosteric effect on the transport. Functionally, symporter that cotransports short-chain neutral amino acids and sodium ions from the extraccellular to the intracellular side of the cell membrane. The transport is elctrogenic, pH dependent and driven by the Na(+) electrochemical gradient. Participates in the astroglia-derived glutamine transport into GABAergic interneurons for neurotransmitter GABA de novo synthesis. May also contributes to amino acid transport in placental trophoblast. Regulates synaptic plasticity. The protein is Sodium-coupled neutral amino acid symporter 1 of Rattus norvegicus (Rat).